The following is a 74-amino-acid chain: ATP synthase F(1) complex subunit epsilon, mitochondrial (74 aa).

It belongs to the eukaryotic ATPase epsilon family. Component of the ATP synthase complex composed at least of ATP5F1A/subunit alpha, ATP5F1B/subunit beta, ATP5MC1/subunit c (homooctomer), MT-ATP6/subunit a, MT-ATP8/subunit 8, ATP5ME/subunit e, ATP5MF/subunit f, ATP5MG/subunit g, ATP5MK/subunit k, ATP5MJ/subunit j, ATP5F1C/subunit gamma, ATP5F1D/subunit delta, ATP5F1E/subunit epsilon, ATP5PF/subunit F6, ATP5PB/subunit b, ATP5PD/subunit d, ATP5PO/subunit OSCP. ATP synthase complex consists of a soluble F(1) head domain (subunits alpha(3) and beta(3)) - the catalytic core - and a membrane F(0) domain - the membrane proton channel (subunits c, a, 8, e, f, g, k and j). These two domains are linked by a central stalk (subunits gamma, delta, and epsilon) rotating inside the F1 region and a stationary peripheral stalk (subunits F6, b, d, and OSCP).

The protein resides in the mitochondrion. Its subcellular location is the mitochondrion inner membrane. Functionally, subunit epsilon, of the mitochondrial membrane ATP synthase complex (F(1)F(0) ATP synthase or Complex V) that produces ATP from ADP in the presence of a proton gradient across the membrane which is generated by electron transport complexes of the respiratory chain. ATP synthase complex consist of a soluble F(1) head domain - the catalytic core - and a membrane F(1) domain - the membrane proton channel. These two domains are linked by a central stalk rotating inside the F(1) region and a stationary peripheral stalk. During catalysis, ATP synthesis in the catalytic domain of F(1) is coupled via a rotary mechanism of the central stalk subunits to proton translocation. In vivo, can only synthesize ATP although its ATP hydrolase activity can be activated artificially in vitro. May be essential for the assembly of F(1) and may play an important role in the incorporation of the hydrophobic subunit c into the F(1)-c oligomer rotor of the mitochondrial ATP synthase complex. This is ATP synthase F(1) complex subunit epsilon, mitochondrial from Dictyostelium discoideum (Social amoeba).